The primary structure comprises 312 residues: Ribosomal protein uL3 glutamine methyltransferase (312 aa).

It belongs to the protein N5-glutamine methyltransferase family. PrmB subfamily.

The catalysed reaction is L-glutaminyl-[ribosomal protein uL3] + S-adenosyl-L-methionine = N(5)-methyl-L-glutaminyl-[ribosomal protein uL3] + S-adenosyl-L-homocysteine + H(+). In terms of biological role, methylates large ribosomal subunit protein uL3 on a specific glutamine residue. The sequence is that of Ribosomal protein uL3 glutamine methyltransferase from Xylella fastidiosa (strain Temecula1 / ATCC 700964).